We begin with the raw amino-acid sequence, 606 residues long: Aspartate--tRNA(Asp/Asn) ligase (606 aa).

Residue Glu187 coordinates L-aspartate. An aspartate region spans residues 211 to 214 (QQFK). Positions 233 and 461 each coordinate L-aspartate. Position 233–235 (233–235 (RDE)) interacts with ATP. Residue Glu495 participates in ATP binding. Position 502 (Arg502) interacts with L-aspartate. 547–550 (GLDR) is an ATP binding site.

The protein belongs to the class-II aminoacyl-tRNA synthetase family. Type 1 subfamily. As to quaternary structure, homodimer.

The protein localises to the cytoplasm. It catalyses the reaction tRNA(Asx) + L-aspartate + ATP = L-aspartyl-tRNA(Asx) + AMP + diphosphate. Functionally, aspartyl-tRNA synthetase with relaxed tRNA specificity since it is able to aspartylate not only its cognate tRNA(Asp) but also tRNA(Asn). Reaction proceeds in two steps: L-aspartate is first activated by ATP to form Asp-AMP and then transferred to the acceptor end of tRNA(Asp/Asn). The sequence is that of Aspartate--tRNA(Asp/Asn) ligase from Chlorobium phaeobacteroides (strain DSM 266 / SMG 266 / 2430).